The sequence spans 860 residues: Leucine--tRNA ligase (860 aa).

The 'HIGH' region motif lies at 42 to 52 (PYPSGRLHMGH). Positions 619-623 (KMSKS) match the 'KMSKS' region motif. K622 lines the ATP pocket.

This sequence belongs to the class-I aminoacyl-tRNA synthetase family.

The protein resides in the cytoplasm. The enzyme catalyses tRNA(Leu) + L-leucine + ATP = L-leucyl-tRNA(Leu) + AMP + diphosphate. This is Leucine--tRNA ligase from Photorhabdus laumondii subsp. laumondii (strain DSM 15139 / CIP 105565 / TT01) (Photorhabdus luminescens subsp. laumondii).